The following is a 298-amino-acid chain: ADP-ribosyl cyclase/cyclic ADP-ribose hydrolase 1 (298 aa).

The Cytoplasmic portion of the chain corresponds to 1–21 (MPDYEFSPASGDRPRSWISKQ). The helical; Signal-anchor for type II membrane protein transmembrane segment at 22 to 42 (VLIVLGVCLPVILALAIWVGV) threads the bilayer. At 43–298 (LTWRQSSMGA…PEHPSCSVLM (256 aa)) the chain is on the extracellular side. Disulfide bonds link C64/C80, C97/C178, and C158/C171. An N-linked (GlcNAc...) asparagine glycan is attached at N98. C117 is an active-site residue. An N-linked (GlcNAc...) asparagine glycan is attached at N118. A glycan (N-linked (GlcNAc...) asparagine) is linked at N177. C199 is an active-site residue. N-linked (GlcNAc...) asparagine glycans are attached at residues N207 and N268. Disulfide bonds link C252–C273 and C285–C294.

This sequence belongs to the ADP-ribosyl cyclase family. As to quaternary structure, homodimer. As to expression, osteoclasts.

Its subcellular location is the cell membrane. It localises to the microsome membrane. It is found in the endoplasmic reticulum membrane. It carries out the reaction NAD(+) = cyclic ADP-beta-D-ribose + nicotinamide + H(+). It catalyses the reaction 2'-phospho-cyclic ADP-ribose + nicotinate = nicotinate-adenine dinucleotide phosphate. The catalysed reaction is NAD(+) + H2O = ADP-D-ribose + nicotinamide + H(+). The enzyme catalyses nicotinate + NADP(+) = nicotinate-adenine dinucleotide phosphate + nicotinamide. Functionally, synthesizes cyclic ADP-ribose (cADPR), a second messenger for glucose-induced insulin secretion. Synthesizes the Ca(2+) mobilizer nicotinate-adenine dinucleotide phosphate, NAADP(+), from 2'-phospho-cADPR and nicotinic acid, as well as from NADP(+) and nicotinic acid. Also has cADPR hydrolase activity. The protein is ADP-ribosyl cyclase/cyclic ADP-ribose hydrolase 1 (CD38) of Oryctolagus cuniculus (Rabbit).